A 393-amino-acid chain; its full sequence is Protein TsgA (393 aa).

A run of 12 helical transmembrane segments spans residues 11-31 (WISF…GMVM), 51-71 (FLNA…EIVP), 78-98 (FGFI…SLAL), 101-121 (AAMF…TFLI), 134-154 (LLFT…VAAF), 162-182 (WYWV…LTFG), 206-226 (IGVL…LGFI), 245-265 (ALVS…SFIL), 273-293 (ILTV…TGTQ), 298-318 (WFIL…ITLG), 332-352 (FILT…GPIV), and 361-381 (LLTA…LGFV).

The protein belongs to the major facilitator superfamily. TsgA family.

It is found in the cell inner membrane. This is Protein TsgA from Salmonella heidelberg (strain SL476).